A 598-amino-acid polypeptide reads, in one-letter code: Elongation factor 4 (598 aa).

The 182-residue stretch at 2–183 folds into the tr-type G domain; that stretch reads KNIRNFCIIA…AIINRVPAPS (182 aa). Residues 14-19 and 130-133 contribute to the GTP site; these read DHGKST and NKVD.

The protein belongs to the TRAFAC class translation factor GTPase superfamily. Classic translation factor GTPase family. LepA subfamily.

Its subcellular location is the cell inner membrane. The enzyme catalyses GTP + H2O = GDP + phosphate + H(+). Required for accurate and efficient protein synthesis under certain stress conditions. May act as a fidelity factor of the translation reaction, by catalyzing a one-codon backward translocation of tRNAs on improperly translocated ribosomes. Back-translocation proceeds from a post-translocation (POST) complex to a pre-translocation (PRE) complex, thus giving elongation factor G a second chance to translocate the tRNAs correctly. Binds to ribosomes in a GTP-dependent manner. The protein is Elongation factor 4 of Christiangramia forsetii (strain DSM 17595 / CGMCC 1.15422 / KT0803) (Gramella forsetii).